The following is a 336-amino-acid chain: Ephrin-B2 (336 aa).

Positions 1 to 28 (MAMARSRRDSVWKYCWGLLMVLCRTAIS) are cleaved as a signal peptide. Residues 29–232 (RSIVLEPIYW…LLGSEVALFA (204 aa)) are Extracellular-facing. Residues 31 to 167 (IVLEPIYWNS…TRAMKILMKV (137 aa)) enclose the Ephrin RBD domain. An N-linked (GlcNAc...) asparagine glycan is attached at N39. 2 disulfides stabilise this stretch: C65–C104 and C92–C156. N142 carries an N-linked (GlcNAc...) asparagine glycan. The segment at 170 to 216 (DASSAGSARNHGPTRRPELEAGTNGRSSTTSPFVKPNPGSSTDGNSA) is disordered. The segment covering 193–216 (NGRSSTTSPFVKPNPGSSTDGNSA) has biased composition (polar residues). A helical transmembrane segment spans residues 233-253 (GIASGCIIFIVIIITLVVLLL). The Cytoplasmic portion of the chain corresponds to 254 to 336 (KYRRRHRKHS…QSPANIYYKV (83 aa)). Residue S263 is modified to Phosphoserine. Residue T277 is modified to Phosphothreonine. R280 is modified (omega-N-methylarginine). The short motif at 334-336 (YKV) is the PDZ-binding element.

It belongs to the ephrin family. In terms of assembly, interacts with PDZRN3. Binds to the ephrin receptor EPHA3, EPHA4 and EPHB4. Post-translationally, inducible phosphorylation of tyrosine residues in the cytoplasmic domain. As to expression, expressed in inner and outer pillar cells of the organ of Corti (at protein level). Expressed on lateral floor plate cells, specifically on commissural axon segments that have passed through the floor plate. Expressed in cells of the retinal ganglion cell layer during retinal axon guidance to the optic disk. Expressed in myogenic progenitor cells.

It is found in the cell membrane. It localises to the cell junction. The protein resides in the adherens junction. Cell surface transmembrane ligand for Eph receptors, a family of receptor tyrosine kinases which are crucial for migration, repulsion and adhesion during neuronal, vascular and epithelial development. Binds promiscuously Eph receptors residing on adjacent cells, leading to contact-dependent bidirectional signaling into neighboring cells. The signaling pathway downstream of the receptor is referred to as forward signaling while the signaling pathway downstream of the ephrin ligand is referred to as reverse signaling. Binds to receptor tyrosine kinase including EPHA4, EPHA3 and EPHB4. Together with EPHB4 plays a central role in heart morphogenesis and angiogenesis through regulation of cell adhesion and cell migration. EPHB4-mediated forward signaling controls cellular repulsion and segregation from EFNB2-expressing cells. May play a role in constraining the orientation of longitudinally projecting axons. In Mus musculus (Mouse), this protein is Ephrin-B2 (Efnb2).